Reading from the N-terminus, the 1859-residue chain is U3 small nucleolar RNA-associated protein 10 (1859 aa).

A helical transmembrane segment spans residues 258–278; sequence LGAYSVLAVLSAVAPLSIELL. The HEAT 1 repeat unit spans residues 578–616; that stretch reads VLPLLLIAFNDPSSHIRAAFAQLVQLVSEITKAIHENKK. The helical transmembrane segment at 1392–1412 threads the bilayer; it reads IVIASISAIVSIVNVLGIKTL. One copy of the HEAT 2 repeat lies at 1819-1857; it reads LVPHIAELLEDDDEAVEIEVREGLVRVIEKVLGEPLDRY.

The protein belongs to the HEATR1/UTP10 family. In terms of assembly, component of the ribosomal small subunit (SSU) processome.

It is found in the nucleus. The protein resides in the nucleolus. Its subcellular location is the membrane. Involved in nucleolar processing of pre-18S ribosomal RNA. Involved in ribosome biosynthesis. This Lodderomyces elongisporus (strain ATCC 11503 / CBS 2605 / JCM 1781 / NBRC 1676 / NRRL YB-4239) (Yeast) protein is U3 small nucleolar RNA-associated protein 10.